The sequence spans 332 residues: rRNA biogenesis protein rrp-36 (332 aa).

Disordered stretches follow at residues 1–91 (MPAV…ASQL), 104–196 (GALK…SGKS), 243–262 (SMES…ELLS), and 312–332 (KKIA…AEDR). Composition is skewed to acidic residues over residues 27–45 (EPDS…EEEG), 53–77 (DTEE…DSDA), and 117–127 (EDGSDDDEEKE). Basic and acidic residues-rich tracts occupy residues 128–142 (EPNW…MKAK) and 165–183 (RRRD…RDPR). Positions 212 to 274 (DYQEDEMKQL…KKKEKELIKQ (63 aa)) form a coiled coil. The segment covering 315 to 332 (AGKEKKALPLARRTAEDR) has biased composition (basic and acidic residues).

This sequence belongs to the RRP36 family. In terms of assembly, associates with 90S and pre-40S pre-ribosomal particles.

It is found in the nucleus. It localises to the nucleolus. In terms of biological role, component of the 90S pre-ribosome involved in the maturation of rRNAs. Required for early cleavages of the pre-RNAs in the 40S ribosomal subunit maturation pathway. This is rRNA biogenesis protein rrp-36 (rrp-36) from Neurospora crassa (strain ATCC 24698 / 74-OR23-1A / CBS 708.71 / DSM 1257 / FGSC 987).